Reading from the N-terminus, the 279-residue chain is Acetyl-coenzyme A carboxylase carboxyl transferase subunit beta (279 aa).

A CoA carboxyltransferase N-terminal domain is found at 23 to 279 (MWWKCDECGA…IVRLMTMLAP (257 aa)). Zn(2+) contacts are provided by Cys27, Cys30, Cys46, and Cys49. A C4-type zinc finger spans residues 27-49 (CDECGAMLHKKQLEDNFYTCSEC).

It belongs to the AccD/PCCB family. In terms of assembly, acetyl-CoA carboxylase is a heterohexamer composed of biotin carboxyl carrier protein (AccB), biotin carboxylase (AccC) and two subunits each of ACCase subunit alpha (AccA) and ACCase subunit beta (AccD). Zn(2+) is required as a cofactor.

It is found in the cytoplasm. It catalyses the reaction N(6)-carboxybiotinyl-L-lysyl-[protein] + acetyl-CoA = N(6)-biotinyl-L-lysyl-[protein] + malonyl-CoA. Its pathway is lipid metabolism; malonyl-CoA biosynthesis; malonyl-CoA from acetyl-CoA: step 1/1. In terms of biological role, component of the acetyl coenzyme A carboxylase (ACC) complex. Biotin carboxylase (BC) catalyzes the carboxylation of biotin on its carrier protein (BCCP) and then the CO(2) group is transferred by the transcarboxylase to acetyl-CoA to form malonyl-CoA. This is Acetyl-coenzyme A carboxylase carboxyl transferase subunit beta from Chlorobium phaeobacteroides (strain DSM 266 / SMG 266 / 2430).